The following is a 400-amino-acid chain: DNA primase small subunit PriS (400 aa).

Catalysis depends on residues Asp-98, Asp-100, and Asp-306.

It belongs to the eukaryotic-type primase small subunit family. As to quaternary structure, heterodimer of a small subunit (PriS) and a large subunit (PriL). Mg(2+) is required as a cofactor. Mn(2+) serves as cofactor.

In terms of biological role, catalytic subunit of DNA primase, an RNA polymerase that catalyzes the synthesis of short RNA molecules used as primers for DNA polymerase during DNA replication. The small subunit contains the primase catalytic core and has DNA synthesis activity on its own. Binding to the large subunit stabilizes and modulates the activity, increasing the rate of DNA synthesis while decreasing the length of the DNA fragments, and conferring RNA synthesis capability. The DNA polymerase activity may enable DNA primase to also catalyze primer extension after primer synthesis. May also play a role in DNA repair. The protein is DNA primase small subunit PriS of Methanocella arvoryzae (strain DSM 22066 / NBRC 105507 / MRE50).